Here is a 543-residue protein sequence, read N- to C-terminus: Alanine aminotransferase 1, mitochondrial (543 aa).

Residues 1 to 55 (MRRFVIGQAKNLIDQSRRRQLHHHKNLSFVSLIPPFSAPSDSSSRHLSSSSSSDM) constitute a mitochondrion transit peptide. The segment covering 43–63 (SSRHLSSSSSSDMSASDSSSS) has biased composition (low complexity). Residues 43–64 (SSRHLSSSSSSDMSASDSSSSL) form a disordered region. S56 is modified (N-acetylserine). Residues Y173, 209 to 210 (AS), Y235, N291, Y322, and 354 to 356 (SFQ) each bind pyridoxal 5'-phosphate. K360 carries the post-translational modification N6-(pyridoxal phosphate)lysine. R369 and N397 together coordinate pyridoxal 5'-phosphate.

The protein belongs to the class-I pyridoxal-phosphate-dependent aminotransferase family. Alanine aminotransferase subfamily. Homodimer. Pyridoxal 5'-phosphate serves as cofactor. In terms of processing, the N-terminus is blocked. Mostly expressed in roots and shoots, mostly in vascular tissues, and, to a lower extent, in flowers and leaves.

The protein localises to the mitochondrion. It carries out the reaction L-alanine + 2-oxoglutarate = pyruvate + L-glutamate. It participates in photosynthesis; C4 acid pathway. It functions in the pathway amino-acid degradation; L-alanine degradation via transaminase pathway; pyruvate from L-alanine: step 1/1. Functionally, is the major alanine aminotransferase in roots that catalyzes the conversion of alanine to pyruvate. Involved in the rapid conversion of alanine to pyruvate during recovery from low-oxygen stress. The sequence is that of Alanine aminotransferase 1, mitochondrial from Arabidopsis thaliana (Mouse-ear cress).